The following is a 204-amino-acid chain: Arginine exporter protein ArgO (204 aa).

6 consecutive transmembrane segments (helical) span residues 1–21, 37–57, 67–87, 111–131, 154–174, and 179–199; these read MWAV…PLGP, LMVA…GIFG, LLLG…GWGA, IIAT…DTFV, TASF…APWL, and VQRV…LQLA.

The protein belongs to the LysE/ArgO transporter (TC 2.A.75) family.

The protein localises to the cell inner membrane. The catalysed reaction is L-arginine(in) = L-arginine(out). Functionally, involved in the export of arginine. Important to control the intracellular level of arginine and the correct balance between arginine and lysine. The protein is Arginine exporter protein ArgO of Pectobacterium atrosepticum (strain SCRI 1043 / ATCC BAA-672) (Erwinia carotovora subsp. atroseptica).